Consider the following 436-residue polypeptide: 3-phosphoshikimate 1-carboxyvinyltransferase (436 aa).

The 3-phosphoshikimate site is built by K23, S24, and R28. A phosphoenolpyruvate-binding site is contributed by K23. Phosphoenolpyruvate contacts are provided by G97 and R126. Residues S171, Q173, D323, and K350 each coordinate 3-phosphoshikimate. Residue Q173 coordinates phosphoenolpyruvate. Catalysis depends on D323, which acts as the Proton acceptor. 2 residues coordinate phosphoenolpyruvate: R354 and R396.

Belongs to the EPSP synthase family. In terms of assembly, monomer.

The protein localises to the cytoplasm. It carries out the reaction 3-phosphoshikimate + phosphoenolpyruvate = 5-O-(1-carboxyvinyl)-3-phosphoshikimate + phosphate. It functions in the pathway metabolic intermediate biosynthesis; chorismate biosynthesis; chorismate from D-erythrose 4-phosphate and phosphoenolpyruvate: step 6/7. In terms of biological role, catalyzes the transfer of the enolpyruvyl moiety of phosphoenolpyruvate (PEP) to the 5-hydroxyl of shikimate-3-phosphate (S3P) to produce enolpyruvyl shikimate-3-phosphate and inorganic phosphate. This Prochlorococcus marinus (strain AS9601) protein is 3-phosphoshikimate 1-carboxyvinyltransferase.